The primary structure comprises 116 residues: NADH-ubiquinone oxidoreductase chain 3 (116 aa).

Helical transmembrane passes span 8 to 28 (VAAT…LPSL), 56 to 76 (FFLV…LLPL), and 87 to 107 (ISLL…IYEW).

This sequence belongs to the complex I subunit 3 family.

It is found in the mitochondrion membrane. It catalyses the reaction a ubiquinone + NADH + 5 H(+)(in) = a ubiquinol + NAD(+) + 4 H(+)(out). Core subunit of the mitochondrial membrane respiratory chain NADH dehydrogenase (Complex I) that is believed to belong to the minimal assembly required for catalysis. Complex I functions in the transfer of electrons from NADH to the respiratory chain. The immediate electron acceptor for the enzyme is believed to be ubiquinone. The protein is NADH-ubiquinone oxidoreductase chain 3 (MT-ND3) of Squalus acanthias (Spiny dogfish).